We begin with the raw amino-acid sequence, 683 residues long: Long-chain-fatty-acid--CoA ligase 5 (683 aa).

A helical; Signal-anchor for type III membrane protein transmembrane segment spans residues 12-32; that stretch reads LPTPALICLLTFGTAIFLWLI. The Cytoplasmic portion of the chain corresponds to 33 to 683; the sequence is NRPQPVLPLI…IKSLYESIEE (651 aa). Lys361 carries the N6-acetyllysine modification.

The protein belongs to the ATP-dependent AMP-binding enzyme family.

Its subcellular location is the mitochondrion. The protein resides in the endoplasmic reticulum. The protein localises to the mitochondrion outer membrane. It localises to the endoplasmic reticulum membrane. It is found in the cell membrane. The catalysed reaction is a long-chain fatty acid + ATP + CoA = a long-chain fatty acyl-CoA + AMP + diphosphate. It carries out the reaction (5Z,8Z,11Z,14Z)-eicosatetraenoate + ATP + CoA = (5Z,8Z,11Z,14Z)-eicosatetraenoyl-CoA + AMP + diphosphate. The enzyme catalyses hexadecanoate + ATP + CoA = hexadecanoyl-CoA + AMP + diphosphate. It catalyses the reaction (E)-hexadec-2-enoate + ATP + CoA = (2E)-hexadecenoyl-CoA + AMP + diphosphate. The catalysed reaction is 15-hydroxy-(5Z,8Z,11Z,13E)-eicosatetraenoate + ATP + CoA = 15-hydroxy-(5Z,8Z,11Z,13E)-eicosatetraenoyl-CoA + AMP + diphosphate. It carries out the reaction 12-hydroxy-(5Z,8Z,10E,14Z)-eicosatetraenoate + ATP + CoA = 12-hydroxy-(5Z,8Z,10E,14Z)-eicosatetraenoyl-CoA + AMP + diphosphate. The enzyme catalyses 5-hydroxy-(6E,8Z,11Z,14Z)-eicosatetraenoate + ATP + CoA = 5-hydroxy-(6E,8Z,11Z,14Z)-eicosatetraenoyl-CoA + AMP + diphosphate. It catalyses the reaction 14,15-epoxy-(5Z,8Z,11Z)-eicosatrienoate + ATP + CoA = 14,15-epoxy-(5Z,8Z,11Z)-eicosatrienoyl-CoA + AMP + diphosphate. The catalysed reaction is 11,12-epoxy-(5Z,8Z,14Z)-eicosatrienoate + ATP + CoA = 11,12-epoxy-(5Z,8Z,14Z)-eicosatrienoyl-CoA + AMP + diphosphate. It carries out the reaction (9Z)-octadecenoate + ATP + CoA = (9Z)-octadecenoyl-CoA + AMP + diphosphate. In terms of biological role, catalyzes the conversion of long-chain fatty acids to their active form acyl-CoAs for both synthesis of cellular lipids, and degradation via beta-oxidation. ACSL5 may activate fatty acids from exogenous sources for the synthesis of triacylglycerol destined for intracellular storage. It was suggested that it may also stimulate fatty acid oxidation. At the villus tip of the crypt-villus axis of the small intestine may sensitize epithelial cells to apoptosis specifically triggered by the death ligand TRAIL. May have a role in the survival of glioma cells. Utilizes a wide range of saturated fatty acids with a preference for C16-C18 unsaturated fatty acids. This chain is Long-chain-fatty-acid--CoA ligase 5, found in Mus musculus (Mouse).